The sequence spans 1649 residues: eIF-2-alpha kinase GCN2 (1649 aa).

Disordered stretches follow at residues 1–25 (MAGG…RQDH), 138–158 (NKPP…QEEQ), and 227–256 (HGGS…YSVC). Residues 25-137 (HELQALEAIY…YHVQSFLSEH (113 aa)) enclose the RWD domain. Residues 146 to 205 (HEEMLERRAQEEQQRLLEAKRKEEQEQREILHEIQRRKEEIKEEKKRKEMAKQERLEIAS) are a coiled coil. Position 230 is a phosphoserine (S230). The segment covering 237–249 (GKHRANSSGRSRR) has biased composition (basic residues). Protein kinase domains follow at residues 296-539 (VYNA…HSFI) and 590-1001 (FEEL…SELL). ATP-binding positions include 596–604 (LGKGAFGAV) and K619. Disordered regions lie at residues 660–750 (ERPA…QSFL) and 766–788 (ENSK…ESEP). T667 is modified (phosphothreonine). Polar residues predominate over residues 705–717 (LSSSVEWSTSGER). Residues 731 to 740 (SDDEDDDEDE) show a composition bias toward acidic residues. Residues 778–787 (NEKNGCHESE) show a composition bias toward basic and acidic residues. The Proton acceptor role is filled by D848. Phosphothreonine is present on T871. A phosphothreonine; by autocatalysis mark is found at T899 and T904. The tract at residues 1022 to 1493 (VDGKAYRTMM…DHVLQKLRTK (472 aa)) is histidyl-tRNA synthetase-like. K1259 carries the post-translational modification N6-acetyllysine.

It belongs to the protein kinase superfamily. Ser/Thr protein kinase family. GCN2 subfamily. Homodimer; homodimerization is important for kinase activation by uncharged tRNAs. Interacts with GCN1; this interaction stimulates EIF2AK4/GCN2 kinase activity and is impaired by IMPACT upon a variety of stress conditions, such as amino acid depletion, UV-C irradiation, proteasome inhibitor treatment and glucose deprivation. Interacts with DNAJC3; this interaction inhibits EIF2AK4/GCN2 kinase activity during endoplasmic reticulum (ER), hypothermic and amino acid-starving stress conditions. Interacts with MAP3K20; activates EIF2AK4/GCN2 kinase activity in response to moderate ribotoxic stress. As to quaternary structure, (Microbial infection) Interacts with hepatitis E virus (HEV) ORF1 protease; this interaction inhibits dimerization of EIF2AK4 and prevents EIF2AK4-mediated phosphorylation of EIF2A. Post-translationally, autophosphorylated; autophosphorylation on Thr-899 is increased upon amino acid starvation and in UV irradiation cells and inhibited in presence of IMPACT. In terms of tissue distribution, widely expressed. Expressed in lung, smooth muscle cells and macrophages.

Its subcellular location is the cytoplasm. It catalyses the reaction L-seryl-[protein] + ATP = O-phospho-L-seryl-[protein] + ADP + H(+). It carries out the reaction L-threonyl-[protein] + ATP = O-phospho-L-threonyl-[protein] + ADP + H(+). Metabolic-stress sensing protein kinase that phosphorylates the alpha subunit of eukaryotic translation initiation factor 2 (EIF2S1/eIF-2-alpha) in response to low amino acid availability. Plays a role as an activator of the integrated stress response (ISR) required for adaptation to amino acid starvation. EIF2S1/eIF-2-alpha phosphorylation in response to stress converts EIF2S1/eIF-2-alpha into a global protein synthesis inhibitor, leading to a global attenuation of cap-dependent translation, and thus to a reduced overall utilization of amino acids, while concomitantly initiating the preferential translation of ISR-specific mRNAs, such as the transcriptional activator ATF4, and hence allowing ATF4-mediated reprogramming of amino acid biosynthetic gene expression to alleviate nutrient depletion. Binds uncharged tRNAs. Required for the translational induction of protein kinase PRKCH following amino acid starvation. Involved in cell cycle arrest by promoting cyclin D1 mRNA translation repression after the unfolded protein response pathway (UPR) activation or cell cycle inhibitor CDKN1A/p21 mRNA translation activation in response to amino acid deprivation. Plays a role in the consolidation of synaptic plasticity, learning as well as formation of long-term memory. Plays a role in neurite outgrowth inhibition. Plays a proapoptotic role in response to glucose deprivation. Promotes global cellular protein synthesis repression in response to UV irradiation independently of the stress-activated protein kinase/c-Jun N-terminal kinase (SAPK/JNK) and p38 MAPK signaling pathways. Plays a role in the antiviral response against alphavirus infection; impairs early viral mRNA translation of the incoming genomic virus RNA, thus preventing alphavirus replication. Functionally, (Microbial infection) Plays a role in modulating the adaptive immune response to yellow fever virus infection; promotes dendritic cells to initiate autophagy and antigene presentation to both CD4(+) and CD8(+) T-cells under amino acid starvation. The polypeptide is eIF-2-alpha kinase GCN2 (Homo sapiens (Human)).